The chain runs to 811 residues: Ent-13-epi-manoyl oxide synthase KSL2, chloroplastic (811 aa).

A chloroplast-targeting transit peptide spans 1 to 49 (MALPLSTCLLFHPKESRSRRFCFSPASAASLKSGLHSATSAKIASMPTC). Residues Asp-550, Asp-554, Asn-694, and Glu-702 each coordinate Mg(2+). The DDXXD motif signature appears at 550-554 (DDFFD).

The protein belongs to the terpene synthase family. Mg(2+) is required as a cofactor.

It is found in the plastid. Its subcellular location is the chloroplast. It catalyses the reaction ent-8alpha-hydroxylabd-13-en-15-yl diphosphate = ent-13-epi-manoyl oxide + diphosphate. It functions in the pathway secondary metabolite biosynthesis; terpenoid biosynthesis. Functionally, involved in diterpenoid biosynthesis. Catalyzes the conversion of ent-8alpha-hydroxylabd-13-en-15-yl diphosphate to ent-13-epi-manoyl oxide. The sequence is that of Ent-13-epi-manoyl oxide synthase KSL2, chloroplastic from Salvia miltiorrhiza (Chinese sage).